The sequence spans 119 residues: MARVKRGVTTHARHKKVLEQSKGFRGRSSTNYRIALERLEKALRYAYRDRRNKKRDFRALWIQRINAAVREHGLTYSKFIFGLDKAGIEIDRKVLAAIAFDDAATFAEIVKKAQAALAA.

It belongs to the bacterial ribosomal protein bL20 family.

Binds directly to 23S ribosomal RNA and is necessary for the in vitro assembly process of the 50S ribosomal subunit. It is not involved in the protein synthesizing functions of that subunit. The polypeptide is Large ribosomal subunit protein bL20 (Gluconacetobacter diazotrophicus (strain ATCC 49037 / DSM 5601 / CCUG 37298 / CIP 103539 / LMG 7603 / PAl5)).